Consider the following 137-residue polypeptide: Large ribosomal subunit protein uL16 (137 aa).

Belongs to the universal ribosomal protein uL16 family. Part of the 50S ribosomal subunit.

Functionally, binds 23S rRNA and is also seen to make contacts with the A and possibly P site tRNAs. The polypeptide is Large ribosomal subunit protein uL16 (Bradyrhizobium sp. (strain BTAi1 / ATCC BAA-1182)).